A 366-amino-acid polypeptide reads, in one-letter code: UDP-N-acetylglucosamine--N-acetylmuramyl-(pentapeptide) pyrophosphoryl-undecaprenol N-acetylglucosamine transferase (366 aa).

UDP-N-acetyl-alpha-D-glucosamine contacts are provided by residues 15–17, Asn127, Arg175, Ser201, Ile255, and Gln300; that span reads TGG.

It belongs to the glycosyltransferase 28 family. MurG subfamily.

The protein localises to the cell inner membrane. The enzyme catalyses di-trans,octa-cis-undecaprenyl diphospho-N-acetyl-alpha-D-muramoyl-L-alanyl-D-glutamyl-meso-2,6-diaminopimeloyl-D-alanyl-D-alanine + UDP-N-acetyl-alpha-D-glucosamine = di-trans,octa-cis-undecaprenyl diphospho-[N-acetyl-alpha-D-glucosaminyl-(1-&gt;4)]-N-acetyl-alpha-D-muramoyl-L-alanyl-D-glutamyl-meso-2,6-diaminopimeloyl-D-alanyl-D-alanine + UDP + H(+). Its pathway is cell wall biogenesis; peptidoglycan biosynthesis. Cell wall formation. Catalyzes the transfer of a GlcNAc subunit on undecaprenyl-pyrophosphoryl-MurNAc-pentapeptide (lipid intermediate I) to form undecaprenyl-pyrophosphoryl-MurNAc-(pentapeptide)GlcNAc (lipid intermediate II). This Thiobacillus denitrificans (strain ATCC 25259 / T1) protein is UDP-N-acetylglucosamine--N-acetylmuramyl-(pentapeptide) pyrophosphoryl-undecaprenol N-acetylglucosamine transferase.